A 272-amino-acid polypeptide reads, in one-letter code: Acetylglutamate kinase (272 aa).

Substrate contacts are provided by residues 46–47, Arg-68, and Asn-166; that span reads GA.

This sequence belongs to the acetylglutamate kinase family. ArgB subfamily.

The protein localises to the cytoplasm. It catalyses the reaction N-acetyl-L-glutamate + ATP = N-acetyl-L-glutamyl 5-phosphate + ADP. The protein operates within amino-acid biosynthesis; L-arginine biosynthesis; N(2)-acetyl-L-ornithine from L-glutamate: step 2/4. Its function is as follows. Catalyzes the ATP-dependent phosphorylation of N-acetyl-L-glutamate. This chain is Acetylglutamate kinase, found in Dehalococcoides mccartyi (strain CBDB1).